We begin with the raw amino-acid sequence, 163 residues long: Crossover junction endodeoxyribonuclease RuvC (163 aa).

Residues D7, E68, and H142 contribute to the active site. Positions 7, 68, and 142 each coordinate Mg(2+).

The protein belongs to the RuvC family. As to quaternary structure, homodimer which binds Holliday junction (HJ) DNA. The HJ becomes 2-fold symmetrical on binding to RuvC with unstacked arms; it has a different conformation from HJ DNA in complex with RuvA. In the full resolvosome a probable DNA-RuvA(4)-RuvB(12)-RuvC(2) complex forms which resolves the HJ. The cofactor is Mg(2+).

Its subcellular location is the cytoplasm. It catalyses the reaction Endonucleolytic cleavage at a junction such as a reciprocal single-stranded crossover between two homologous DNA duplexes (Holliday junction).. Its function is as follows. The RuvA-RuvB-RuvC complex processes Holliday junction (HJ) DNA during genetic recombination and DNA repair. Endonuclease that resolves HJ intermediates. Cleaves cruciform DNA by making single-stranded nicks across the HJ at symmetrical positions within the homologous arms, yielding a 5'-phosphate and a 3'-hydroxyl group; requires a central core of homology in the junction. The consensus cleavage sequence is 5'-(A/T)TT(C/G)-3'. Cleavage occurs on the 3'-side of the TT dinucleotide at the point of strand exchange. HJ branch migration catalyzed by RuvA-RuvB allows RuvC to scan DNA until it finds its consensus sequence, where it cleaves and resolves the cruciform DNA. The protein is Crossover junction endodeoxyribonuclease RuvC of Anaplasma phagocytophilum (strain HZ).